The following is an 88-amino-acid chain: FXYD domain-containing ion transport regulator 4 (88 aa).

An N-terminal signal peptide occupies residues 1–20 (MEEITCAFLLLLAGLPALEA). The Extracellular segment spans residues 21-38 (SDPVDKDSPFYYDWESLQ). A helical membrane pass occupies residues 39 to 59 (LGGLIFGGLLCIAGIAMALSG). Residues 60–88 (KCKCRRTHKPSSLPGKATPLIIPGSANTC) are Cytoplasmic-facing.

The protein belongs to the FXYD family. In terms of assembly, regulatory subunit of the sodium/potassium-transporting ATPase which is composed of a catalytic alpha subunit, a non-catalytic beta subunit and a regulatory subunit. The regulatory subunit, a member of the FXYD protein family, modulates the enzymatic activity in a tissue- and isoform-specific way by changing affinities of the Na+/K+-ATPase toward Na(+), K(+) or ATP.

Its subcellular location is the cell membrane. The protein localises to the basolateral cell membrane. Its function is as follows. Associates with and regulates the activity of the sodium/potassium-transporting ATPase (NKA) which catalyzes the hydrolysis of ATP coupled with the exchange of Na(+) and K(+) ions across the plasma membrane. Increases the apparent affinity of the transporter for Na(+) and increases NKA activity. This is FXYD domain-containing ion transport regulator 4 (Fxyd4) from Mus musculus (Mouse).